The sequence spans 359 residues: Methyltransferase eqxD (359 aa).

Residues G198–G199, D224, S248–F249, R264, and R265 contribute to the S-adenosyl-L-methionine site.

It belongs to the class I-like SAM-binding methyltransferase superfamily. Cation-independent O-methyltransferase family.

The catalysed reaction is trichosetin + S-adenosyl-L-methionine = equisetin + S-adenosyl-L-homocysteine + H(+). It participates in mycotoxin biosynthesis. In terms of biological role, methyltransferase; part of the gene cluster that mediates the biosynthesis of equisetin, a trans-fused decalin-containing tetramic acid with antimicrobial activity. The PKS module of eqxS together with the enoylreductase eqxC catalyze the formation of the polyketide unit which is then conjugated to L-serine by the condensation domain of the eqxS NRPS module. Activity of the Dieckmann cyclase domain (RED) results in release of the Dieckmann product intermediate. Diels-Alderase eqx3 is involved in endo-selective Diels-Alder cycloaddition to form the decalin ring, leading to the production of N-desmethylequisetin also called trichosetin. Subsequent N-methylation is carried out by eqxD to give equisetin. The polypeptide is Methyltransferase eqxD (Fusarium heterosporum).